A 611-amino-acid chain; its full sequence is BTB/POZ domain-containing protein 9 (611 aa).

Residues 36 to 104 enclose the BTB domain; sequence GDVTFVVEKK…IYTGRATLTD (69 aa). The BACK domain maps to 142-240; sequence VCMTFDVASL…SLTELLNVVR (99 aa). A disordered region spans residues 560–611; sequence QSAQKDSSDEPGTGGASAAGQQLDPHALQAPSGSSLPSSPGSNSRSPNRQHQ. Over residues 586-611 the composition is skewed to low complexity; the sequence is ALQAPSGSSLPSSPGSNSRSPNRQHQ.

This Bos taurus (Bovine) protein is BTB/POZ domain-containing protein 9 (BTBD9).